A 234-amino-acid chain; its full sequence is Large ribosomal subunit protein uL1 (234 aa).

This sequence belongs to the universal ribosomal protein uL1 family. In terms of assembly, part of the 50S ribosomal subunit.

Functionally, binds directly to 23S rRNA. The L1 stalk is quite mobile in the ribosome, and is involved in E site tRNA release. Protein L1 is also a translational repressor protein, it controls the translation of the L11 operon by binding to its mRNA. This Desulfosudis oleivorans (strain DSM 6200 / JCM 39069 / Hxd3) (Desulfococcus oleovorans) protein is Large ribosomal subunit protein uL1.